The chain runs to 352 residues: C-C chemokine receptor type 5 (352 aa).

Topologically, residues 1 to 30 (MDYQVSSPTYDIDYYTSEPCQKIKVKQIAA) are extracellular. Position 3 is a sulfotyrosine (Y3). O-linked (GalNAc...) serine glycans are attached at residues S6 and S7. Sulfotyrosine occurs at positions 10, 14, and 15. Cystine bridges form between C20–C269 and C101–C178. A helical membrane pass occupies residues 31-58 (RLLPPLYSLVFIFGFVGNILVVLILINC). Residues 59 to 68 (KRLKSMTDIY) are Cytoplasmic-facing. Residues 69-89 (LLNLAISDLLFLLTVPFWAHY) form a helical membrane-spanning segment. The Extracellular segment spans residues 90 to 102 (AAAQWDFGNTMCQ). The helical transmembrane segment at 103-124 (LLTGLYFIGFFSGIFFIILLTI) threads the bilayer. Topologically, residues 125 to 141 (DRYLAIVHAVFALKART) are cytoplasmic. Residues 142-166 (VTFGVVTSVITWVVAVFASLPRIIF) form a helical membrane-spanning segment. Topologically, residues 167 to 198 (TRSQREGLHYTCSSHFPYSQYQFWKNFQTLKI) are extracellular. A helical transmembrane segment spans residues 199–218 (VILGLVLPLLVMVICYSGIL). Over 219–235 (KTLLRCRNDKKRHRAVR) the chain is Cytoplasmic. The chain crosses the membrane as a helical span at residues 236–260 (LIFTIMIVYFLFWAPYNIVLLLNTF). Over 261–277 (QEFFGLNNCSSSNRLDQ) the chain is Extracellular. Residues 278-301 (AMQVTETLGMTHCCINPIIYAFVG) traverse the membrane as a helical segment. Topologically, residues 302–352 (EKFRNYLLVFFQKHIAKRFCKCCSIFQQDAPERASSVYTRSTGEQETSVGL) are cytoplasmic. Residues C321, C323, and C324 are each lipidated (S-palmitoyl cysteine). 4 positions are modified to phosphoserine; by BARK1: S336, S337, S342, and S349.

The protein belongs to the G-protein coupled receptor 1 family. In terms of assembly, interacts with PRAF2. Efficient ligand binding to CCL3/MIP-1alpha and CCL4/MIP-1beta requires sulfation, O-glycosylation and sialic acid modifications. Glycosylation on Ser-6 is required for efficient binding of CCL4. Interacts with GRK2. Interacts with ARRB1 and ARRB2. Interacts with CNIH4. Interacts with S100A4; this interaction stimulates T-lymphocyte chemotaxis. In terms of processing, sulfated on at least 2 of the N-terminal tyrosines. Sulfation is required for efficient binding of the chemokines, CCL3 and CCL4. Palmitoylation in the C-terminal is important for cell surface expression. Post-translationally, phosphorylation on serine residues in the C-terminal is stimulated by binding CC chemokines especially by APO-RANTES. In terms of processing, O-glycosylated, but not N-glycosylated. Ser-6 appears to be the major site even if Ser-7 may be also O-glycosylated. Also sialylated glycans present which contribute to chemokine binding. Thr-16 and Ser-17 may also be glycosylated and, if so, with small moieties such as a T-antigen.

It is found in the cell membrane. Its function is as follows. Receptor for a number of inflammatory CC-chemokines including CCL3/MIP-1-alpha, CCL4/MIP-1-beta and RANTES and subsequently transduces a signal by increasing the intracellular calcium ion level. May play a role in the control of granulocytic lineage proliferation or differentiation. Participates in T-lymphocyte migration to the infection site by acting as a chemotactic receptor. This Chlorocebus sabaeus (Green monkey) protein is C-C chemokine receptor type 5 (CCR5).